We begin with the raw amino-acid sequence, 273 residues long: F-actin-capping protein subunit alpha (273 aa).

It belongs to the F-actin-capping protein alpha subunit family. As to quaternary structure, component of the F-actin capping complex, composed of a heterodimer of an alpha and a beta subunit.

Its subcellular location is the cytoplasm. The protein resides in the cytoskeleton. It localises to the actin patch. Its function is as follows. F-actin-capping proteins bind in a Ca(2+)-independent manner to the fast growing ends of actin filaments (barbed end) thereby blocking the exchange of subunits at these ends. Unlike other capping proteins (such as gelsolin and severin), these proteins do not sever actin filaments. The polypeptide is F-actin-capping protein subunit alpha (fac-1) (Neurospora crassa (strain ATCC 24698 / 74-OR23-1A / CBS 708.71 / DSM 1257 / FGSC 987)).